The chain runs to 111 residues: Large ribosomal subunit protein uL22 (111 aa).

The protein belongs to the universal ribosomal protein uL22 family. As to quaternary structure, part of the 50S ribosomal subunit.

Functionally, this protein binds specifically to 23S rRNA; its binding is stimulated by other ribosomal proteins, e.g. L4, L17, and L20. It is important during the early stages of 50S assembly. It makes multiple contacts with different domains of the 23S rRNA in the assembled 50S subunit and ribosome. In terms of biological role, the globular domain of the protein is located near the polypeptide exit tunnel on the outside of the subunit, while an extended beta-hairpin is found that lines the wall of the exit tunnel in the center of the 70S ribosome. This is Large ribosomal subunit protein uL22 from Polynucleobacter necessarius subsp. necessarius (strain STIR1).